Here is a 597-residue protein sequence, read N- to C-terminus: MSAILSADDLNDFISPGVACIKPVETLPQKESQSENPYEVTKEDKIQPENLPPAQISLTDCLACSGCVTSAEAVLISLQSHAEVLNTLDAYPEFRLSNESGQDDIKTTETADSESRVFVASVSPQVRASLATTYGISEREAQCMIDQFLSGSQGLRAGGKFHNGFAWVVDTNTMREAVLALTADEVANSLTSIDPLNTLPKRPILSSACPGWICYAEKTHPFILPHLSRLKSPQALTGTLLKSVLSKALGISPTRIWHLAIMPCFDKKLEASREELTDSAWGPTPSEPHTPVRDVDCVITSRELLTLAASRGISLPRLPLKPLPRSYYSPFPDRSLDSFLFSKRSSGQTAASGTSGGYLHHVLTTFQAKNPGSQIVTQRGRNADVVEYVLMSPGGEPLLKAARYYGFRNIQNLVRKLKPARASRLPGARQSATSAGGSRRQLASRNAASAGSGTDYAYVEVMACPGGCTNGGGQVRIEDAREAASNMSVESQTEPPEAALKPTPHEQRAWLARVDEAYYSADSDSEVPATSEPASVISRDAEIHGVLQHWSEYMNIPLSKLAYTSYREVESDVGKTQTGPNDTARVVELASKIGGGW.

[4Fe-4S] cluster is bound by residues Cys-20, Cys-61, Cys-64, Cys-67, Cys-209, and Cys-264. The tract at residues 419-447 (PARASRLPGARQSATSAGGSRRQLASRNA) is disordered. Polar residues predominate over residues 430–447 (QSATSAGGSRRQLASRNA). The [4Fe-4S] cluster site is built by Cys-464 and Cys-468. The segment at 482 to 504 (EAASNMSVESQTEPPEAALKPTP) is disordered. Polar residues predominate over residues 485-494 (SNMSVESQTE).

The protein belongs to the NARF family.

Functionally, component of the cytosolic Fe/S protein assembly machinery. Required for maturation of extramitochondrial Fe/S proteins. May play a role in the transfer of pre-assembled Fe/S clusters to target apoproteins. The polypeptide is Cytosolic Fe-S cluster assembly factor nar1 (nar1) (Aspergillus clavatus (strain ATCC 1007 / CBS 513.65 / DSM 816 / NCTC 3887 / NRRL 1 / QM 1276 / 107)).